The following is a 72-amino-acid chain: Translation initiation factor IF-1 (72 aa).

The region spanning 1 to 72 (MAKEEMLEFP…TKGRINYRFK (72 aa)) is the S1-like domain.

It belongs to the IF-1 family. Component of the 30S ribosomal translation pre-initiation complex which assembles on the 30S ribosome in the order IF-2 and IF-3, IF-1 and N-formylmethionyl-tRNA(fMet); mRNA recruitment can occur at any time during PIC assembly.

The protein resides in the cytoplasm. In terms of biological role, one of the essential components for the initiation of protein synthesis. Stabilizes the binding of IF-2 and IF-3 on the 30S subunit to which N-formylmethionyl-tRNA(fMet) subsequently binds. Helps modulate mRNA selection, yielding the 30S pre-initiation complex (PIC). Upon addition of the 50S ribosomal subunit IF-1, IF-2 and IF-3 are released leaving the mature 70S translation initiation complex. This Paracoccus denitrificans (strain Pd 1222) protein is Translation initiation factor IF-1.